The sequence spans 570 residues: Urease subunit alpha (570 aa).

The 440-residue stretch at 131–570 folds into the Urease domain; sequence GGVDTHIHFI…LPMAQRYFLF (440 aa). Ni(2+)-binding residues include histidine 136, histidine 138, and lysine 219. Lysine 219 carries the N6-carboxylysine modification. Histidine 221 contacts substrate. Histidine 248 and histidine 274 together coordinate Ni(2+). Catalysis depends on histidine 322, which acts as the Proton donor. Residue aspartate 362 participates in Ni(2+) binding.

Belongs to the metallo-dependent hydrolases superfamily. Urease alpha subunit family. Heterotrimer of UreA (gamma), UreB (beta) and UreC (alpha) subunits. Three heterotrimers associate to form the active enzyme. The cofactor is Ni cation. Carboxylation allows a single lysine to coordinate two nickel ions.

It is found in the cytoplasm. It catalyses the reaction urea + 2 H2O + H(+) = hydrogencarbonate + 2 NH4(+). It functions in the pathway nitrogen metabolism; urea degradation; CO(2) and NH(3) from urea (urease route): step 1/1. The polypeptide is Urease subunit alpha (Methylocella silvestris (strain DSM 15510 / CIP 108128 / LMG 27833 / NCIMB 13906 / BL2)).